The following is a 316-amino-acid chain: Ribosomal RNA small subunit methyltransferase H (316 aa).

S-adenosyl-L-methionine is bound by residues 35–37 (SGH), Asp55, Phe84, Asp105, and Gln112.

It belongs to the methyltransferase superfamily. RsmH family.

It localises to the cytoplasm. The catalysed reaction is cytidine(1402) in 16S rRNA + S-adenosyl-L-methionine = N(4)-methylcytidine(1402) in 16S rRNA + S-adenosyl-L-homocysteine + H(+). In terms of biological role, specifically methylates the N4 position of cytidine in position 1402 (C1402) of 16S rRNA. The polypeptide is Ribosomal RNA small subunit methyltransferase H (Streptococcus equi subsp. zooepidemicus (strain MGCS10565)).